The primary structure comprises 215 residues: Probable nicotinate-nucleotide adenylyltransferase (215 aa).

This sequence belongs to the NadD family.

The enzyme catalyses nicotinate beta-D-ribonucleotide + ATP + H(+) = deamido-NAD(+) + diphosphate. Its pathway is cofactor biosynthesis; NAD(+) biosynthesis; deamido-NAD(+) from nicotinate D-ribonucleotide: step 1/1. In terms of biological role, catalyzes the reversible adenylation of nicotinate mononucleotide (NaMN) to nicotinic acid adenine dinucleotide (NaAD). The protein is Probable nicotinate-nucleotide adenylyltransferase of Coxiella burnetii (strain Dugway 5J108-111).